The following is a 586-amino-acid chain: MSQSSIIVVGGGLAGLMATIKAAESGMAVKLFSIVPVKRSHSVCAQGGINGAVNTKGEGDSPWEHFDDTVYGGDFLANQPPVKAMCEAAPSIIHLLDRMGVMFNRTPEGLLDFRRFGGTQHHRTAYAGATTGQQLLYALDEQVRRYEVAGLVTKYEGWEFLGAVLDDDRTCRGIVAQNLTNMQIESFRSDAVIMATGGPGIIFGKSTNSMINTGSAASIVYQQGAYYANGEFIQIHPTAIPGDDKLRLMSESARGEGGRVWTYKDGKPWYFLEEKYPAYGNLVPRDIATREIFDVCVNQKLGINGENMVYLDLSHKDPKELDIKLGGIIEIYEKFMGDDPRKLPMKIFPAVHYSMGGLWVDYDQMTNIPGLFAAGECDYSMHGGNRLGANSLLSAIYGGMVAGPNAVKYVNGLESSAEDMSSSLFDAHVKKEEEKWADIMSMDGTENAYVLHKELGEWMTANVTVVRHNDKLLKTDDKIQELMERFKKININDTTKWSNQGAMFTRQFSNMLQLARVITLGAYNRNESRGAHYKPDYPERNDDEWLKTTMAKHVSPYEAPEFEYQDVDVSLITPRKRDYSKKKVAK.

FAD-binding positions include 10–15 (GGGLAG) and 33–48 (SIVPVKRSHSVCAQGG). At His41 the chain carries Tele-8alpha-FAD histidine. 2 residues coordinate substrate: His236 and Ser250. Arg285 (proton acceptor) is an active-site residue. His352 lines the substrate pocket. Glu376 provides a ligand contact to FAD. Arg386 serves as a coordination point for substrate. Residue 391–392 (SL) coordinates FAD.

This sequence belongs to the FAD-dependent oxidoreductase 2 family. FRD/SDH subfamily. In B.subtilis succinate dehydrogenase forms part of an enzyme complex containing three subunits: a flavoprotein, an iron-sulfur protein and cytochrome b-558. Interacts with FloT. FAD serves as cofactor.

The protein resides in the cell membrane. Its subcellular location is the membrane raft. The catalysed reaction is a quinone + succinate = fumarate + a quinol. It functions in the pathway carbohydrate metabolism; tricarboxylic acid cycle; fumarate from succinate (bacterial route): step 1/1. This Bacillus subtilis (strain 168) protein is Succinate dehydrogenase flavoprotein subunit (sdhA).